Here is a 93-residue protein sequence, read N- to C-terminus: Alpha-defensin 5 (93 aa).

Positions 1–19 (MKTFVLLSALVLLAFQVQA) are cleaved as a signal peptide. A propeptide spanning residues 20-58 (DPIHKTDEETNTEEQPGEEDQAVSISFGGQEGSALHEEL) is cleaved from the precursor. 3 disulfide bridges follow: Cys-64–Cys-92, Cys-66–Cys-81, and Cys-71–Cys-91.

It belongs to the alpha-defensin family.

The protein localises to the secreted. In terms of biological role, probably contributes to the antimicrobial barrier function of the small bowel mucosa. This is Alpha-defensin 5 (Defa5) from Mus musculus (Mouse).